The primary structure comprises 526 residues: Probable feruloyl esterase B-2 (526 aa).

Positions 1–19 (MPSLRRLLPFLAAGSAALA) are cleaved as a signal peptide. 2 disulfide bridges follow: C28–C75 and C63–C114. 4 N-linked (GlcNAc...) asparagine glycosylation sites follow: N53, N85, N98, and N138. Cystine bridges form between C187–C441, C256–C273, and C282–C291. The Acyl-ester intermediate role is filled by S188. N-linked (GlcNAc...) asparagine glycosylation occurs at N246. The Ca(2+) site is built by D257, D260, A262, D264, and I266. 2 N-linked (GlcNAc...) asparagine glycosylation sites follow: N287 and N311. Catalysis depends on charge relay system residues D400 and H440. Residues N490 and N516 are each glycosylated (N-linked (GlcNAc...) asparagine). A disulfide bridge links C503 with C525.

It belongs to the tannase family.

The protein resides in the secreted. It carries out the reaction feruloyl-polysaccharide + H2O = ferulate + polysaccharide.. Involved in degradation of plant cell walls. Hydrolyzes the feruloyl-arabinose ester bond in arabinoxylans as well as the feruloyl-galactose and feruloyl-arabinose ester bonds in pectin. The chain is Probable feruloyl esterase B-2 (faeB-2) from Aspergillus oryzae (strain ATCC 42149 / RIB 40) (Yellow koji mold).